A 91-amino-acid polypeptide reads, in one-letter code: Small ribosomal subunit protein bS16 (91 aa).

It belongs to the bacterial ribosomal protein bS16 family.

This is Small ribosomal subunit protein bS16 from Levilactobacillus brevis (strain ATCC 367 / BCRC 12310 / CIP 105137 / JCM 1170 / LMG 11437 / NCIMB 947 / NCTC 947) (Lactobacillus brevis).